Consider the following 460-residue polypeptide: GTPase Der (460 aa).

2 EngA-type G domains span residues 21–187 (PRVV…FSVD) and 198–373 (VRLA…AQLN). Residues 27–34 (GRPNVGKS), 74–78 (DTSGF), 141–144 (NKTE), 204–211 (GKPNTGKS), 251–255 (DTAGI), and 316–319 (NKWD) each bind GTP. The KH-like domain occupies 374–457 (TKVETSALNT…PVKLTIRKNC (84 aa)).

This sequence belongs to the TRAFAC class TrmE-Era-EngA-EngB-Septin-like GTPase superfamily. EngA (Der) GTPase family. As to quaternary structure, associates with the 50S ribosomal subunit.

In terms of biological role, GTPase that plays an essential role in the late steps of ribosome biogenesis. The sequence is that of GTPase Der from Treponema pallidum subsp. pallidum (strain SS14).